Consider the following 242-residue polypeptide: B-box zinc finger protein 20 (242 aa).

Residues Cys5, Cys8, Cys28, His33, Cys58, Cys61, Cys81, and His91 each contribute to the Zn(2+) site. A B box-type 1; atypical zinc finger spans residues 5–47 (CAVCDKEEASVFCCADEAALCNGCDRHVHFANKLAGKHLRFSL). The segment at 58-100 (CDICGERRALLFCQEDRAILCRECDIPIHQANEHTKKHNRFLL) adopts a B box-type 2; atypical zinc-finger fold. The disordered stretch occupies residues 112-153 (YPRASNSNSAAAFGRAKTRPKSVSSEVPSSASNEVFTSSSST). Low complexity predominate over residues 133-153 (SVSSEVPSSASNEVFTSSSST).

As to quaternary structure, interacts with MED25 and COP1. In terms of processing, COP1-mediated ubiquitination and subsequent proteasomal degradation of BBX20 occurs in the dark.

It is found in the nucleus. Acts as a positive regulator of seedling photomorphogenesis. Plays a negative role in brassinosteroid responses. The polypeptide is B-box zinc finger protein 20 (Arabidopsis thaliana (Mouse-ear cress)).